The primary structure comprises 322 residues: Peroxisomal adenine nucleotide carrier 1 (322 aa).

3 Solcar repeats span residues 5-94, 104-184, and 202-298; these read LESV…FKRV, IGTK…LKQH, and LSAF…ITAT. Transmembrane regions (helical) follow at residues 8–28, 104–124, 158–178, 201–221, 254–274, and 286–306; these read VSEA…LYPL, IGTK…SVLI, FDGL…YTVF, VLSA…ATVL, IPGV…FKGL, and ALLL…ILAI.

The protein belongs to the mitochondrial carrier (TC 2.A.29) family. In terms of tissue distribution, expressed in stamens, pollen grains, seeds, leaves, cotyledons, roots, stems, flowers, hypocotyls and siliques.

It is found in the peroxisome membrane. Peroxisomal adenine nucleotide transporter catalyzing the counterexchange of ATP with AMP. ATP is needed by reactions that generate acyl-CoA for peroxisomal fatty acid beta-oxidation during postgerminative growth. Required for the beta-oxidation reactions involved in auxin biosynthesis and for the conversion of seed-reserved triacylglycerols into sucrose that is necessary for growth before the onset of photosynthesis. This is Peroxisomal adenine nucleotide carrier 1 (PNC1) from Arabidopsis thaliana (Mouse-ear cress).